Reading from the N-terminus, the 151-residue chain is Myosin light polypeptide 6 (151 aa).

N-acetylcysteine is present on C2. The EF-hand 1 domain maps to 7–42 (DQTAEFKEAFQLFDRTGDGKILYSQCGDVMRALGQN). A Phosphoserine modification is found at S57. An N6-acetyllysine modification is found at K81. EF-hand domains lie at 84–119 (GTYE…LGEK) and 119–151 (KMTE…VLNG).

In terms of assembly, myosin is a hexamer of 2 heavy chains and 4 light chains. Interacts with SPATA6.

Functionally, regulatory light chain of myosin. Does not bind calcium. This Rattus norvegicus (Rat) protein is Myosin light polypeptide 6 (Myl6).